Here is a 475-residue protein sequence, read N- to C-terminus: MPKLQGFEFWSRTLGGARHVVAPMVDQSELAWRLLSRRHGAQLCYTPMLHAQVFVRDANYRKENLYCDVCPEDRPLIVQFCANDPEVFVQAALLAQDYCDAIDLNLGCPQMIAKRGHYGAFLQEEWDLLQRMILLAHERLSVPVTCKIRVFPEIDKTVRYAQMLEKAGCQLLTVHGRTKEQKGPMAGTASWEHIKAVRKAVGIPVFANGNIQCLQDVERCIQDTGVQGVMSAEGNLHNPALFEGRSPAVWELAEEYLDIVRQHPCPLSYVRAHLFKLWHHTLQVHQQLREELAKVKTLEGVAAVSQALKLRCQEDMSRQQEGVRPADNLPAFHWICQPYIRPGPREGSKENSGGRSKRALEEEEGSMEGLSKNKLKKQLRNPHKTFDPSLKPKYAKCDQCGNPKGNRCVFNLCRGCCKKRAFRETADCPGHGLLFKTKLEKSLAWKGTQPGLQEAQQVRPVTPSGFSEVVGSALA.

FMN-binding positions include 23-25 (PMV) and Q79. C108 functions as the Proton donor in the catalytic mechanism. Residues K147, H175, 208–210 (NGN), and 232–233 (AE) contribute to the FMN site. A disordered region spans residues 343–388 (GPREGSKENSGGRSKRALEEEEGSMEGLSKNKLKKQLRNPHKTFDP). Basic residues predominate over residues 373 to 383 (NKLKKQLRNPH).

Belongs to the Dus family. Dus1 subfamily. FMN is required as a cofactor.

The protein localises to the cytoplasm. It is found in the nucleus. The enzyme catalyses 5,6-dihydrouridine(16) in tRNA + NADP(+) = uridine(16) in tRNA + NADPH + H(+). It carries out the reaction 5,6-dihydrouridine(16) in tRNA + NAD(+) = uridine(16) in tRNA + NADH + H(+). The catalysed reaction is 5,6-dihydrouridine(17) in tRNA + NAD(+) = uridine(17) in tRNA + NADH + H(+). It catalyses the reaction 5,6-dihydrouridine(17) in tRNA + NADP(+) = uridine(17) in tRNA + NADPH + H(+). Catalyzes the synthesis of dihydrouridine, a modified base found in the D-loop of most tRNAs. Specifically modifies U16 and U17 in cytoplasmic tRNAs. Affects the level of some mature tRNA and thereby the total cellular translation. The chain is tRNA-dihydrouridine(16/17) synthase [NAD(P)(+)]-like (Dus1l) from Mus musculus (Mouse).